The primary structure comprises 360 residues: Phospho-N-acetylmuramoyl-pentapeptide-transferase (360 aa).

The next 10 helical transmembrane spans lie at 18-38 (VFSY…FISL), 73-93 (TMGG…WADL), 94-114 (SNIY…VGFV), 134-154 (YFWQ…IAQG), 168-188 (LLPQ…VGTS), 199-219 (GLAI…AYVT), 239-259 (LVIV…FNTY), 263-283 (VFMG…IAIL), 288-308 (LVLF…ILQV), and 338-358 (VIVR…ATLK).

This sequence belongs to the glycosyltransferase 4 family. MraY subfamily. The cofactor is Mg(2+).

It is found in the cell inner membrane. The enzyme catalyses UDP-N-acetyl-alpha-D-muramoyl-L-alanyl-gamma-D-glutamyl-meso-2,6-diaminopimeloyl-D-alanyl-D-alanine + di-trans,octa-cis-undecaprenyl phosphate = di-trans,octa-cis-undecaprenyl diphospho-N-acetyl-alpha-D-muramoyl-L-alanyl-D-glutamyl-meso-2,6-diaminopimeloyl-D-alanyl-D-alanine + UMP. It participates in cell wall biogenesis; peptidoglycan biosynthesis. Functionally, catalyzes the initial step of the lipid cycle reactions in the biosynthesis of the cell wall peptidoglycan: transfers peptidoglycan precursor phospho-MurNAc-pentapeptide from UDP-MurNAc-pentapeptide onto the lipid carrier undecaprenyl phosphate, yielding undecaprenyl-pyrophosphoryl-MurNAc-pentapeptide, known as lipid I. The chain is Phospho-N-acetylmuramoyl-pentapeptide-transferase from Colwellia psychrerythraea (strain 34H / ATCC BAA-681) (Vibrio psychroerythus).